Reading from the N-terminus, the 204-residue chain is B9 domain-containing protein 1 (204 aa).

Residues 9–127 form the C2 B9-type domain; sequence FLLMITGQVE…TIPMFVPEST (119 aa).

The protein belongs to the B9D family. In terms of assembly, part of the tectonic-like complex (also named B9 complex).

The protein resides in the cytoplasm. It localises to the cytoskeleton. The protein localises to the cilium basal body. Functionally, component of the tectonic-like complex, a complex localized at the transition zone of primary cilia and acting as a barrier that prevents diffusion of transmembrane proteins between the cilia and plasma membranes. Required for ciliogenesis and sonic hedgehog/SHH signaling. The sequence is that of B9 domain-containing protein 1 (B9d1) from Mus musculus (Mouse).